A 353-amino-acid chain; its full sequence is Photosystem II protein D1 (353 aa).

The residue at position 2 (T2) is an N-acetylthreonine. Position 2 is a phosphothreonine (T2). 3 helical membrane passes run 29 to 46 (YIGWFGVLMIPTLLTATS), 118 to 133 (HFLLGVACYMGREWEL), and 142 to 156 (WIAVAYSAPVAAATA). H118 is a chlorophyll a binding site. Y126 lines the pheophytin a pocket. [CaMn4O5] cluster is bound by residues D170 and E189. The chain crosses the membrane as a helical span at residues 197 to 218 (FHMLGVAGVFGGSLFSAMHGSL). H198 is a binding site for chlorophyll a. Residues H215 and 264 to 265 (SF) each bind a quinone. H215 contacts Fe cation. H272 provides a ligand contact to Fe cation. A helical membrane pass occupies residues 274-288 (FLAAWPVVGIWFTAL). The [CaMn4O5] cluster site is built by H332, E333, D342, and A344. Positions 345-353 (AVEAPAVNG) are excised as a propeptide.

It belongs to the reaction center PufL/M/PsbA/D family. As to quaternary structure, PSII is composed of 1 copy each of membrane proteins PsbA, PsbB, PsbC, PsbD, PsbE, PsbF, PsbH, PsbI, PsbJ, PsbK, PsbL, PsbM, PsbT, PsbX, PsbY, PsbZ, Psb30/Ycf12, at least 3 peripheral proteins of the oxygen-evolving complex and a large number of cofactors. It forms dimeric complexes. The D1/D2 heterodimer binds P680, chlorophylls that are the primary electron donor of PSII, and subsequent electron acceptors. It shares a non-heme iron and each subunit binds pheophytin, quinone, additional chlorophylls, carotenoids and lipids. D1 provides most of the ligands for the Mn4-Ca-O5 cluster of the oxygen-evolving complex (OEC). There is also a Cl(-1) ion associated with D1 and D2, which is required for oxygen evolution. The PSII complex binds additional chlorophylls, carotenoids and specific lipids. serves as cofactor. Post-translationally, tyr-161 forms a radical intermediate that is referred to as redox-active TyrZ, YZ or Y-Z. C-terminally processed by CTPA; processing is essential to allow assembly of the oxygen-evolving complex and thus photosynthetic growth.

It localises to the plastid. The protein resides in the chloroplast thylakoid membrane. It carries out the reaction 2 a plastoquinone + 4 hnu + 2 H2O = 2 a plastoquinol + O2. Functionally, photosystem II (PSII) is a light-driven water:plastoquinone oxidoreductase that uses light energy to abstract electrons from H(2)O, generating O(2) and a proton gradient subsequently used for ATP formation. It consists of a core antenna complex that captures photons, and an electron transfer chain that converts photonic excitation into a charge separation. The D1/D2 (PsbA/PsbD) reaction center heterodimer binds P680, the primary electron donor of PSII as well as several subsequent electron acceptors. This chain is Photosystem II protein D1, found in Conocephalum conicum (Snakeskin liverwort).